The primary structure comprises 211 residues: Glycerol-3-phosphate acyltransferase (211 aa).

Helical transmembrane passes span 5 to 25 (ALGM…ILFC), 80 to 100 (PLYL…PVFF), 112 to 132 (FGAI…TWLL), and 138 to 158 (GYSS…VWWF).

The protein belongs to the PlsY family. Probably interacts with PlsX.

It is found in the cell inner membrane. It carries out the reaction an acyl phosphate + sn-glycerol 3-phosphate = a 1-acyl-sn-glycero-3-phosphate + phosphate. The protein operates within lipid metabolism; phospholipid metabolism. Its function is as follows. Catalyzes the transfer of an acyl group from acyl-phosphate (acyl-PO(4)) to glycerol-3-phosphate (G3P) to form lysophosphatidic acid (LPA). This enzyme utilizes acyl-phosphate as fatty acyl donor, but not acyl-CoA or acyl-ACP. In Pectobacterium carotovorum subsp. carotovorum (strain PC1), this protein is Glycerol-3-phosphate acyltransferase.